Here is a 165-residue protein sequence, read N- to C-terminus: Methylated-DNA--protein-cysteine methyltransferase, constitutive (165 aa).

Residue cysteine 130 is the Nucleophile; methyl group acceptor of the active site.

It belongs to the MGMT family.

It localises to the cytoplasm. It carries out the reaction a 6-O-methyl-2'-deoxyguanosine in DNA + L-cysteinyl-[protein] = S-methyl-L-cysteinyl-[protein] + a 2'-deoxyguanosine in DNA. The enzyme catalyses a 4-O-methyl-thymidine in DNA + L-cysteinyl-[protein] = a thymidine in DNA + S-methyl-L-cysteinyl-[protein]. Its function is as follows. Involved in the cellular defense against the biological effects of O6-methylguanine (O6-MeG) and O4-methylthymine (O4-MeT) in DNA. Repairs the methylated nucleobase in DNA by stoichiometrically transferring the methyl group to a cysteine residue in the enzyme. This is a suicide reaction: the enzyme is irreversibly inactivated. This is Methylated-DNA--protein-cysteine methyltransferase, constitutive from Bacillus subtilis (strain 168).